A 389-amino-acid polypeptide reads, in one-letter code: TelA-like protein SH1505 (389 aa).

The protein belongs to the TelA family.

The sequence is that of TelA-like protein SH1505 from Staphylococcus haemolyticus (strain JCSC1435).